The chain runs to 95 residues: Large ribosomal subunit protein uL23 (95 aa).

The protein belongs to the universal ribosomal protein uL23 family. Part of the 50S ribosomal subunit. Contacts protein L29, and trigger factor when it is bound to the ribosome.

In terms of biological role, one of the early assembly proteins it binds 23S rRNA. One of the proteins that surrounds the polypeptide exit tunnel on the outside of the ribosome. Forms the main docking site for trigger factor binding to the ribosome. This Heliobacterium modesticaldum (strain ATCC 51547 / Ice1) protein is Large ribosomal subunit protein uL23.